The following is a 249-amino-acid chain: Putative adhesin RC1281 (249 aa).

The first 22 residues, 1–22 (MKKLLLIAAASTALLTSGLSFA), serve as a signal peptide directing secretion.

Adheres to biotinylated epithelial (Vero cell) proteins. In Rickettsia conorii (strain ATCC VR-613 / Malish 7), this protein is Putative adhesin RC1281.